A 1275-amino-acid chain; its full sequence is Mediator of RNA polymerase II transcription subunit 33B (1275 aa).

Low complexity predominate over residues 772–791; the sequence is GSQSLTPSSGSSSLSTSGGD. A disordered region spans residues 772 to 792; the sequence is GSQSLTPSSGSSSLSTSGGDD.

It belongs to the Mediator complex subunit 33 family. In terms of assembly, component of the Mediator complex. Ubiquitous.

The protein localises to the nucleus. Functionally, component of the Mediator complex, a coactivator involved in the regulated transcription of nearly all RNA polymerase II-dependent genes. Mediator functions as a bridge to convey information from gene-specific regulatory proteins to the basal RNA polymerase II transcription machinery. The Mediator complex, having a compact conformation in its free form, is recruited to promoters by direct interactions with regulatory proteins and serves for the assembly of a functional preinitiation complex with RNA polymerase II and the general transcription factors. Involved in the repression of phenylpropanoid biosynthesis. May compete with MED33B for common binding partners or for occupancy in Mediator. This Arabidopsis thaliana (Mouse-ear cress) protein is Mediator of RNA polymerase II transcription subunit 33B (MED33B).